The sequence spans 393 residues: MHNSPAAAAPKSFDLTSTAFLIVAFLTGIAGALQTPTLSIFLTDEVHARPGMVGFFFTGSAVIGIIVSQFLAGRSDKKGDRKKLIVFCCVLGMLACVLFAWNRNYFILLFIGVFLSSFGSTANPQMFALAREHADRTGREAVMFSSILRAQVSLAWVIGPPLAYALAMGFSFTVMYLSAAVAFIVCGVMVWFFLPSMRKDAPLATGTLEAPRRNRRDTLLLFVICTLMWGTNSLYIINMPLFIINELHLPEKLAGVMMGTAAGLEIPTMLIAGYFAKRLGKRLLMCIAVVAGLCFYVGMLLAHAPATLLGLQLLNAIYIGILGGIGMLYFQDLMPGQAGSATTLYTNTIRVGWIIAGSLAGIAAEIWNYHAVFWFALVMIVATMFCLARIKDV.

A run of 12 helical transmembrane segments spans residues 13–33 (FDLT…AGAL), 52–72 (MVGF…QFLA), 84–101 (LIVF…LFAW), 105–124 (YFIL…TANP), 152–172 (VSLA…GFSF), 174–194 (VMYL…WFFL), 219–239 (LLLF…IINM), 253–273 (LAGV…LIAG), 283–303 (LLMC…LLAH), 308–328 (LLGL…IGML), 344–364 (LYTN…GIAA), and 366–386 (IWNY…TMFC).

It belongs to the major facilitator superfamily. Set transporter family.

The protein localises to the cell inner membrane. In terms of biological role, involved in the efflux of sugars. The physiological role may be the detoxification of non-metabolizable sugar analogs. Can transport lactose and glucose. This chain is Sugar efflux transporter B (setB), found in Salmonella typhimurium (strain LT2 / SGSC1412 / ATCC 700720).